Consider the following 1273-residue polypeptide: DNA-directed RNA polymerase subunit beta (1273 aa).

The protein belongs to the RNA polymerase beta chain family. The RNAP catalytic core consists of 2 alpha, 1 beta, 1 beta' and 1 omega subunit. When a sigma factor is associated with the core the holoenzyme is formed, which can initiate transcription.

The enzyme catalyses RNA(n) + a ribonucleoside 5'-triphosphate = RNA(n+1) + diphosphate. Its function is as follows. DNA-dependent RNA polymerase catalyzes the transcription of DNA into RNA using the four ribonucleoside triphosphates as substrates. The sequence is that of DNA-directed RNA polymerase subunit beta from Phytoplasma mali (strain AT).